The primary structure comprises 246 residues: Eukaryotic translation initiation factor 6 (246 aa).

This sequence belongs to the eIF-6 family. Monomer. Associates with the 60S ribosomal subunit.

The protein localises to the cytoplasm. Its subcellular location is the nucleus. The protein resides in the nucleolus. In terms of biological role, binds to the 60S ribosomal subunit and prevents its association with the 40S ribosomal subunit to form the 80S initiation complex in the cytoplasm. May also be involved in ribosome biogenesis. Involved in miRNA-mediated gene silencing. The polypeptide is Eukaryotic translation initiation factor 6 (Caenorhabditis elegans).